Here is a 32-residue protein sequence, read N- to C-terminus: Dermatoxin-J1 (32 aa).

At Gln32 the chain carries Glutamine amide.

In terms of tissue distribution, expressed by the skin glands.

The protein localises to the secreted. Antimicrobial peptide. In Phasmahyla jandaia (Jandaia leaf frog), this protein is Dermatoxin-J1.